The following is a 348-amino-acid chain: NADH-quinone oxidoreductase subunit H 1 (348 aa).

A run of 8 helical transmembrane segments spans residues 11-31 (IYYISMVAKVLVVFVFVLLTV), 83-103 (FAFLIAPIIALVPAFIGFAVI), 136-156 (VGVLYILALASIGVYGIVLAG), 172-192 (SAQMISYELAAGLAIISVFML), 208-228 (GAWYCFKQPLAFILFFICSLA), 268-288 (MVTVCAVTTTLFLGGWHGPAF), 289-309 (LPGWAWFIAKVYFLIFVCMWI), and 324-344 (LGWKVFLPLTLVNIIVTGIVV).

This sequence belongs to the complex I subunit 1 family. NDH-1 is composed of 14 different subunits. Subunits NuoA, H, J, K, L, M, N constitute the membrane sector of the complex.

It is found in the cell inner membrane. The catalysed reaction is a quinone + NADH + 5 H(+)(in) = a quinol + NAD(+) + 4 H(+)(out). Functionally, NDH-1 shuttles electrons from NADH, via FMN and iron-sulfur (Fe-S) centers, to quinones in the respiratory chain. The immediate electron acceptor for the enzyme in this species is believed to be ubiquinone. Couples the redox reaction to proton translocation (for every two electrons transferred, four hydrogen ions are translocated across the cytoplasmic membrane), and thus conserves the redox energy in a proton gradient. This subunit may bind ubiquinone. This Geobacter sulfurreducens (strain ATCC 51573 / DSM 12127 / PCA) protein is NADH-quinone oxidoreductase subunit H 1.